Reading from the N-terminus, the 513-residue chain is ATP synthase subunit alpha (513 aa).

169-176 (GDRQTGKT) serves as a coordination point for ATP.

Belongs to the ATPase alpha/beta chains family. In terms of assembly, F-type ATPases have 2 components, CF(1) - the catalytic core - and CF(0) - the membrane proton channel. CF(1) has five subunits: alpha(3), beta(3), gamma(1), delta(1), epsilon(1). CF(0) has three main subunits: a(1), b(2) and c(9-12). The alpha and beta chains form an alternating ring which encloses part of the gamma chain. CF(1) is attached to CF(0) by a central stalk formed by the gamma and epsilon chains, while a peripheral stalk is formed by the delta and b chains.

Its subcellular location is the cell inner membrane. The enzyme catalyses ATP + H2O + 4 H(+)(in) = ADP + phosphate + 5 H(+)(out). In terms of biological role, produces ATP from ADP in the presence of a proton gradient across the membrane. The alpha chain is a regulatory subunit. This is ATP synthase subunit alpha from Bordetella petrii (strain ATCC BAA-461 / DSM 12804 / CCUG 43448).